The chain runs to 216 residues: Glycerol-3-phosphate acyltransferase 3 (216 aa).

The next 5 membrane-spanning stretches (helical) occupy residues 6 to 26 (LLLVVIVSYILGSIPFGYLVS), 58 to 78 (LVASLDVIKGASAVAFAGLVI), 92 to 112 (LLFAQVLAGLAAVAGHIWPVF), 125 to 145 (FGGMIALCPVAAIFGGEVLII), and 158 to 178 (ITGVVGAYALLVPLTLISGFP).

This sequence belongs to the PlsY family. In terms of assembly, probably interacts with PlsX.

It localises to the cell membrane. The enzyme catalyses an acyl phosphate + sn-glycerol 3-phosphate = a 1-acyl-sn-glycero-3-phosphate + phosphate. It participates in lipid metabolism; phospholipid metabolism. Functionally, catalyzes the transfer of an acyl group from acyl-phosphate (acyl-PO(4)) to glycerol-3-phosphate (G3P) to form lysophosphatidic acid (LPA). This enzyme utilizes acyl-phosphate as fatty acyl donor, but not acyl-CoA or acyl-ACP. The sequence is that of Glycerol-3-phosphate acyltransferase 3 from Dehalococcoides mccartyi (strain CBDB1).